The chain runs to 212 residues: ATP-dependent Clp protease proteolytic subunit (212 aa).

Serine 109 (nucleophile) is an active-site residue. Histidine 134 is an active-site residue.

The protein belongs to the peptidase S14 family. In terms of assembly, fourteen ClpP subunits assemble into 2 heptameric rings which stack back to back to give a disk-like structure with a central cavity, resembling the structure of eukaryotic proteasomes.

Its subcellular location is the cytoplasm. The enzyme catalyses Hydrolysis of proteins to small peptides in the presence of ATP and magnesium. alpha-casein is the usual test substrate. In the absence of ATP, only oligopeptides shorter than five residues are hydrolyzed (such as succinyl-Leu-Tyr-|-NHMec, and Leu-Tyr-Leu-|-Tyr-Trp, in which cleavage of the -Tyr-|-Leu- and -Tyr-|-Trp bonds also occurs).. Its function is as follows. Cleaves peptides in various proteins in a process that requires ATP hydrolysis. Has a chymotrypsin-like activity. Plays a major role in the degradation of misfolded proteins. The chain is ATP-dependent Clp protease proteolytic subunit from Bdellovibrio bacteriovorus (strain ATCC 15356 / DSM 50701 / NCIMB 9529 / HD100).